We begin with the raw amino-acid sequence, 99 residues long: Large ribosomal subunit protein bL28 (99 aa).

It belongs to the bacterial ribosomal protein bL28 family.

This Rhodospirillum rubrum (strain ATCC 11170 / ATH 1.1.1 / DSM 467 / LMG 4362 / NCIMB 8255 / S1) protein is Large ribosomal subunit protein bL28.